A 92-amino-acid chain; its full sequence is Small ribosomal subunit protein uS19c (92 aa).

The protein belongs to the universal ribosomal protein uS19 family.

The protein localises to the plastid. The protein resides in the chloroplast. Its function is as follows. Protein S19 forms a complex with S13 that binds strongly to the 16S ribosomal RNA. The chain is Small ribosomal subunit protein uS19c from Adiantum capillus-veneris (Maidenhair fern).